The chain runs to 163 residues: ATP synthase subunit b 1 (163 aa).

A helical transmembrane segment spans residues 5-25 (LDATFFAFVGLVLFLALVVYL).

Belongs to the ATPase B chain family. As to quaternary structure, F-type ATPases have 2 components, F(1) - the catalytic core - and F(0) - the membrane proton channel. F(1) has five subunits: alpha(3), beta(3), gamma(1), delta(1), epsilon(1). F(0) has three main subunits: a(1), b(2) and c(10-14). The alpha and beta chains form an alternating ring which encloses part of the gamma chain. F(1) is attached to F(0) by a central stalk formed by the gamma and epsilon chains, while a peripheral stalk is formed by the delta and b chains.

The protein resides in the cell inner membrane. Functionally, f(1)F(0) ATP synthase produces ATP from ADP in the presence of a proton or sodium gradient. F-type ATPases consist of two structural domains, F(1) containing the extramembraneous catalytic core and F(0) containing the membrane proton channel, linked together by a central stalk and a peripheral stalk. During catalysis, ATP synthesis in the catalytic domain of F(1) is coupled via a rotary mechanism of the central stalk subunits to proton translocation. Its function is as follows. Component of the F(0) channel, it forms part of the peripheral stalk, linking F(1) to F(0). The chain is ATP synthase subunit b 1 from Rhizobium etli (strain CIAT 652).